Consider the following 392-residue polypeptide: 23S rRNA (uracil(747)-C(5))-methyltransferase RlmC (392 aa).

[4Fe-4S] cluster-binding residues include Cys4, Cys12, Cys15, and Cys93. The S-adenosyl-L-methionine site is built by Gln218, Phe247, Glu275, and Asn321. Cys348 acts as the Nucleophile in catalysis.

This sequence belongs to the class I-like SAM-binding methyltransferase superfamily. RNA M5U methyltransferase family. RlmC subfamily.

It catalyses the reaction uridine(747) in 23S rRNA + S-adenosyl-L-methionine = 5-methyluridine(747) in 23S rRNA + S-adenosyl-L-homocysteine + H(+). In terms of biological role, catalyzes the formation of 5-methyl-uridine at position 747 (m5U747) in 23S rRNA. This chain is 23S rRNA (uracil(747)-C(5))-methyltransferase RlmC, found in Haemophilus influenzae (strain PittEE).